The chain runs to 109 residues: Hainantoxin-XVIII-2 (109 aa).

The N-terminal stretch at 1–18 is a signal peptide; the sequence is MKLSIIIIATSLVIAVVA. Residues 19-46 constitute a propeptide that is removed on maturation; that stretch reads FPSKDSKAIENDKTEQRMEIVVQETARA. 3 disulfides stabilise this stretch: Cys47–Cys62, Cys59–Cys108, and Cys61–Cys81.

Belongs to the neurotoxin 25 family. F7 subfamily. Expressed by the venom gland.

It localises to the secreted. Its function is as follows. Putative ion channel inhibitor. The protein is Hainantoxin-XVIII-2 of Cyriopagopus hainanus (Chinese bird spider).